The chain runs to 313 residues: Porphobilinogen deaminase (313 aa).

C242 is subject to S-(dipyrrolylmethanemethyl)cysteine.

Belongs to the HMBS family. In terms of assembly, monomer. Dipyrromethane is required as a cofactor.

It carries out the reaction 4 porphobilinogen + H2O = hydroxymethylbilane + 4 NH4(+). It participates in porphyrin-containing compound metabolism; protoporphyrin-IX biosynthesis; coproporphyrinogen-III from 5-aminolevulinate: step 2/4. Functionally, tetrapolymerization of the monopyrrole PBG into the hydroxymethylbilane pre-uroporphyrinogen in several discrete steps. The polypeptide is Porphobilinogen deaminase (Escherichia coli O7:K1 (strain IAI39 / ExPEC)).